We begin with the raw amino-acid sequence, 680 residues long: DNA-directed RNA polymerase subunit beta' (680 aa).

The Zn(2+) site is built by Cys-69, Cys-71, Cys-87, and Cys-90. Asp-489, Asp-491, and Asp-493 together coordinate Mg(2+).

It belongs to the RNA polymerase beta' chain family. RpoC1 subfamily. In plastids the minimal PEP RNA polymerase catalytic core is composed of four subunits: alpha, beta, beta', and beta''. When a (nuclear-encoded) sigma factor is associated with the core the holoenzyme is formed, which can initiate transcription. The cofactor is Mg(2+). Zn(2+) serves as cofactor.

It localises to the plastid. It is found in the chloroplast. The enzyme catalyses RNA(n) + a ribonucleoside 5'-triphosphate = RNA(n+1) + diphosphate. DNA-dependent RNA polymerase catalyzes the transcription of DNA into RNA using the four ribonucleoside triphosphates as substrates. The sequence is that of DNA-directed RNA polymerase subunit beta' from Ranunculus macranthus (Large buttercup).